Consider the following 734-residue polypeptide: Photosystem I P700 chlorophyll a apoprotein A2 (734 aa).

The next 8 membrane-spanning stretches (helical) occupy residues 46–69 (IFAS…FHVA), 135–158 (LYTG…LHLQ), 175–199 (LNHH…HVAI), 273–291 (MAHH…GHMY), 330–353 (IHFQ…QHMY), 369–395 (AALY…IFFI), 417–439 (AIIS…LYVH), and 517–535 (FLVH…LILV). [4Fe-4S] cluster is bound by residues C559 and C568. The next 2 membrane-spanning stretches (helical) occupy residues 575–596 (AFYL…YWHW) and 643–665 (LSVW…MFLI). Chlorophyll a is bound by residues H654, M662, and Y670. W671 is a phylloquinone binding site. A helical transmembrane segment spans residues 707–727 (LVGLAHFSVGYIFTYAAFLIA).

Belongs to the PsaA/PsaB family. The PsaA/B heterodimer binds the P700 chlorophyll special pair and subsequent electron acceptors. PSI consists of a core antenna complex that captures photons, and an electron transfer chain that converts photonic excitation into a charge separation. The eukaryotic PSI reaction center is composed of at least 11 subunits. Requires P700 is a chlorophyll a/chlorophyll a' dimer, A0 is one or more chlorophyll a, A1 is one or both phylloquinones and FX is a shared 4Fe-4S iron-sulfur center. as cofactor.

It is found in the plastid. It localises to the chloroplast thylakoid membrane. It catalyses the reaction reduced [plastocyanin] + hnu + oxidized [2Fe-2S]-[ferredoxin] = oxidized [plastocyanin] + reduced [2Fe-2S]-[ferredoxin]. In terms of biological role, psaA and PsaB bind P700, the primary electron donor of photosystem I (PSI), as well as the electron acceptors A0, A1 and FX. PSI is a plastocyanin-ferredoxin oxidoreductase, converting photonic excitation into a charge separation, which transfers an electron from the donor P700 chlorophyll pair to the spectroscopically characterized acceptors A0, A1, FX, FA and FB in turn. Oxidized P700 is reduced on the lumenal side of the thylakoid membrane by plastocyanin. This Arabidopsis thaliana (Mouse-ear cress) protein is Photosystem I P700 chlorophyll a apoprotein A2.